Here is a 170-residue protein sequence, read N- to C-terminus: Adenine phosphoribosyltransferase (170 aa).

This sequence belongs to the purine/pyrimidine phosphoribosyltransferase family. As to quaternary structure, homodimer.

The protein localises to the cytoplasm. The catalysed reaction is AMP + diphosphate = 5-phospho-alpha-D-ribose 1-diphosphate + adenine. The protein operates within purine metabolism; AMP biosynthesis via salvage pathway; AMP from adenine: step 1/1. Functionally, catalyzes a salvage reaction resulting in the formation of AMP, that is energically less costly than de novo synthesis. This Bacillus licheniformis (strain ATCC 14580 / DSM 13 / JCM 2505 / CCUG 7422 / NBRC 12200 / NCIMB 9375 / NCTC 10341 / NRRL NRS-1264 / Gibson 46) protein is Adenine phosphoribosyltransferase.